The chain runs to 550 residues: Chaperonin GroEL (550 aa).

ATP contacts are provided by residues T29–P32, K50, D86–T90, G416, and D498.

This sequence belongs to the chaperonin (HSP60) family. Forms a cylinder of 14 subunits composed of two heptameric rings stacked back-to-back. Interacts with the co-chaperonin GroES.

The protein resides in the cytoplasm. The enzyme catalyses ATP + H2O + a folded polypeptide = ADP + phosphate + an unfolded polypeptide.. In terms of biological role, together with its co-chaperonin GroES, plays an essential role in assisting protein folding. The GroEL-GroES system forms a nano-cage that allows encapsulation of the non-native substrate proteins and provides a physical environment optimized to promote and accelerate protein folding. In Anaplasma phagocytophilum (strain HZ), this protein is Chaperonin GroEL.